A 203-amino-acid polypeptide reads, in one-letter code: MKKMAIACALLSSVVASSVWADAVSSLKSRLDKVSSFHATFTQKVTDGSGAAVQEGQGDLWVKRPNLFNWHMTQPDESILVSDGKTLWFYNPFVEQATATWLKDATGNTPFMLIARNQASDWQQYNIKQDGDNFVLTPKASNGNLKQFTINVGRDGTIHQFSAVEQDDQRSAYQLKSQQNGAVDPSKFTFTPPQGVTIDDQRK.

An N-terminal signal peptide occupies residues Met1–Ala21. The interval Gln178–Lys203 is disordered.

This sequence belongs to the LolA family. In terms of assembly, monomer.

It localises to the periplasm. Participates in the translocation of lipoproteins from the inner membrane to the outer membrane. Only forms a complex with a lipoprotein if the residue after the N-terminal Cys is not an aspartate (The Asp acts as a targeting signal to indicate that the lipoprotein should stay in the inner membrane). This is Outer-membrane lipoprotein carrier protein from Salmonella paratyphi A (strain ATCC 9150 / SARB42).